The primary structure comprises 312 residues: Acetyl-coenzyme A carboxylase carboxyl transferase subunit alpha (312 aa).

In terms of domain architecture, CoA carboxyltransferase C-terminal spans 36–286 (RLDKEVKSIY…KEYFLDALRT (251 aa)).

This sequence belongs to the AccA family. Acetyl-CoA carboxylase is a heterohexamer composed of biotin carboxyl carrier protein (AccB), biotin carboxylase (AccC) and two subunits each of ACCase subunit alpha (AccA) and ACCase subunit beta (AccD).

The protein localises to the cytoplasm. The catalysed reaction is N(6)-carboxybiotinyl-L-lysyl-[protein] + acetyl-CoA = N(6)-biotinyl-L-lysyl-[protein] + malonyl-CoA. Its pathway is lipid metabolism; malonyl-CoA biosynthesis; malonyl-CoA from acetyl-CoA: step 1/1. Functionally, component of the acetyl coenzyme A carboxylase (ACC) complex. First, biotin carboxylase catalyzes the carboxylation of biotin on its carrier protein (BCCP) and then the CO(2) group is transferred by the carboxyltransferase to acetyl-CoA to form malonyl-CoA. This is Acetyl-coenzyme A carboxylase carboxyl transferase subunit alpha from Helicobacter pylori (strain G27).